Reading from the N-terminus, the 229-residue chain is Flagellar L-ring protein (229 aa).

The N-terminal stretch at 1-23 is a signal peptide; the sequence is MLSRLGARVLYCLAGLALLASGG. Cysteine 24 carries the N-palmitoyl cysteine lipid modification. Cysteine 24 is lipidated: S-diacylglycerol cysteine.

The protein belongs to the FlgH family. In terms of assembly, the basal body constitutes a major portion of the flagellar organelle and consists of four rings (L,P,S, and M) mounted on a central rod.

Its subcellular location is the cell outer membrane. It localises to the bacterial flagellum basal body. Its function is as follows. Assembles around the rod to form the L-ring and probably protects the motor/basal body from shearing forces during rotation. The polypeptide is Flagellar L-ring protein (Cupriavidus pinatubonensis (strain JMP 134 / LMG 1197) (Cupriavidus necator (strain JMP 134))).